A 222-amino-acid chain; its full sequence is MTRLVLGSASPGRLKVLRDAGIEPLVIASHVDEDVVIAALGPDAVPSDVVCVLAAAKAAQVATTLTGTQRIVAADCVVVACDSMLYIEGRLLGKPASIDEAREQWRSMAGRAGQLYTGHGVIRLQDNKTVYRAAETAITTVYFGTPSASDLEAYLASGESLRVAGGFTLDGLGGWFIDGVQGNPSNVIGLSLPLLRSLVQRCGLSVAALWAGNAGGPAHKQQ.

Catalysis depends on D82, which acts as the Proton acceptor.

This sequence belongs to the Maf family. A divalent metal cation serves as cofactor.

It is found in the cytoplasm. It catalyses the reaction a ribonucleoside 5'-triphosphate + H2O = a ribonucleoside 5'-phosphate + diphosphate + H(+). The enzyme catalyses a 2'-deoxyribonucleoside 5'-triphosphate + H2O = a 2'-deoxyribonucleoside 5'-phosphate + diphosphate + H(+). Its function is as follows. Nucleoside triphosphate pyrophosphatase. May have a dual role in cell division arrest and in preventing the incorporation of modified nucleotides into cellular nucleic acids. This is Nucleoside triphosphate pyrophosphatase from Mycobacterium tuberculosis (strain ATCC 25177 / H37Ra).